Here is a 296-residue protein sequence, read N- to C-terminus: MIIGSHVSMSGRKMFLGSVETSIENGANALMIYTGAPQNTRRKAIEDLRIPEGRALLTEHDFKDVVVHAPYIVNLGNTFKPESFKFAVEFLKEEVKRADALGASQLVLHPGSHVGAGPDAAIASITEGLNQIITPEQNVKIALETMAGKGTEVATNFEQIQQIITGVEHNEKLSVCFDTCHTNDAGYDVKNHFDDVMDEFDQIIGLQKIGVIHLNDSKNEMGSHKDRHENLGFGTIGFKALHYIANFDKFQNVPKILETPWVKDPDAKKHSPYQLELAMLKSGRFDDTLIEKIINN.

Zn(2+) contacts are provided by histidine 68, histidine 109, glutamate 144, aspartate 178, histidine 181, histidine 213, aspartate 226, histidine 228, and glutamate 258.

This sequence belongs to the AP endonuclease 2 family. Requires Zn(2+) as cofactor.

It carries out the reaction Endonucleolytic cleavage to 5'-phosphooligonucleotide end-products.. In terms of biological role, endonuclease IV plays a role in DNA repair. It cleaves phosphodiester bonds at apurinic or apyrimidinic (AP) sites, generating a 3'-hydroxyl group and a 5'-terminal sugar phosphate. This Pediococcus pentosaceus (strain ATCC 25745 / CCUG 21536 / LMG 10740 / 183-1w) protein is Probable endonuclease 4.